The chain runs to 296 residues: Co-chaperone protein DjlA (296 aa).

Over M1–K15 the chain is Periplasmic. A helical transmembrane segment spans residues I16–N39. Residues F40 to W296 are Cytoplasmic-facing. A disordered region spans residues Q200–P225. Residues T211–K221 are compositionally biased toward polar residues. In terms of domain architecture, J spans H231–W296.

In terms of assembly, homodimer.

It is found in the cell inner membrane. Regulatory DnaK co-chaperone. Direct interaction between DnaK and DjlA is needed for the induction of the wcaABCDE operon, involved in the synthesis of a colanic acid polysaccharide capsule, possibly through activation of the RcsB/RcsC phosphotransfer signaling pathway. The colanic acid capsule may help the bacterium survive conditions outside the host. The polypeptide is Co-chaperone protein DjlA (Legionella pneumophila subsp. pneumophila (strain Philadelphia 1 / ATCC 33152 / DSM 7513)).